We begin with the raw amino-acid sequence, 194 residues long: NADH-quinone oxidoreductase subunit B 1 (194 aa).

The [4Fe-4S] cluster site is built by cysteine 73, cysteine 74, cysteine 138, and cysteine 168.

The protein belongs to the complex I 20 kDa subunit family. NDH-1 is composed of 14 different subunits. Subunits NuoB, C, D, E, F, and G constitute the peripheral sector of the complex. [4Fe-4S] cluster serves as cofactor.

The protein resides in the cell inner membrane. The catalysed reaction is a quinone + NADH + 5 H(+)(in) = a quinol + NAD(+) + 4 H(+)(out). In terms of biological role, NDH-1 shuttles electrons from NADH, via FMN and iron-sulfur (Fe-S) centers, to quinones in the respiratory chain. The immediate electron acceptor for the enzyme in this species is believed to be ubiquinone. Couples the redox reaction to proton translocation (for every two electrons transferred, four hydrogen ions are translocated across the cytoplasmic membrane), and thus conserves the redox energy in a proton gradient. The chain is NADH-quinone oxidoreductase subunit B 1 from Rhizobium etli (strain CIAT 652).